We begin with the raw amino-acid sequence, 345 residues long: Phosphoribosylformylglycinamidine cyclo-ligase (345 aa).

It belongs to the AIR synthase family.

Its subcellular location is the cytoplasm. It catalyses the reaction 2-formamido-N(1)-(5-O-phospho-beta-D-ribosyl)acetamidine + ATP = 5-amino-1-(5-phospho-beta-D-ribosyl)imidazole + ADP + phosphate + H(+). It participates in purine metabolism; IMP biosynthesis via de novo pathway; 5-amino-1-(5-phospho-D-ribosyl)imidazole from N(2)-formyl-N(1)-(5-phospho-D-ribosyl)glycinamide: step 2/2. The polypeptide is Phosphoribosylformylglycinamidine cyclo-ligase (Staphylococcus carnosus (strain TM300)).